A 72-amino-acid chain; its full sequence is MAKEEAIEVEGIVKESLPNTMFRVELKNGHVILAHLSGKMRKHYIKIVPGDTVKVALSPYDLTRGRIIFRER.

The 72-residue stretch at 1–72 folds into the S1-like domain; sequence MAKEEAIEVE…TRGRIIFRER (72 aa).

The protein belongs to the IF-1 family. Component of the 30S ribosomal translation pre-initiation complex which assembles on the 30S ribosome in the order IF-2 and IF-3, IF-1 and N-formylmethionyl-tRNA(fMet); mRNA recruitment can occur at any time during PIC assembly.

It localises to the cytoplasm. In terms of biological role, one of the essential components for the initiation of protein synthesis. Stabilizes the binding of IF-2 and IF-3 on the 30S subunit to which N-formylmethionyl-tRNA(fMet) subsequently binds. Helps modulate mRNA selection, yielding the 30S pre-initiation complex (PIC). Upon addition of the 50S ribosomal subunit IF-1, IF-2 and IF-3 are released leaving the mature 70S translation initiation complex. The polypeptide is Translation initiation factor IF-1 (Treponema denticola (strain ATCC 35405 / DSM 14222 / CIP 103919 / JCM 8153 / KCTC 15104)).